Consider the following 234-residue polypeptide: (5-formylfuran-3-yl)methyl phosphate synthase (234 aa).

The active-site Schiff-base intermediate with substrate is the lysine 27. The Proton acceptor role is filled by lysine 85.

It belongs to the MfnB family.

The catalysed reaction is 2 D-glyceraldehyde 3-phosphate = 4-(hydroxymethyl)-2-furancarboxaldehyde phosphate + phosphate + 2 H2O. Its pathway is cofactor biosynthesis; methanofuran biosynthesis. In terms of biological role, catalyzes the formation of 4-(hydroxymethyl)-2-furancarboxaldehyde phosphate (4-HFC-P) from two molecules of glyceraldehyde-3-P (GA-3-P). In Methanosarcina acetivorans (strain ATCC 35395 / DSM 2834 / JCM 12185 / C2A), this protein is (5-formylfuran-3-yl)methyl phosphate synthase.